The following is a 232-amino-acid chain: 5'-methylthioadenosine/S-adenosylhomocysteine nucleosidase (232 aa).

Glu12 serves as the catalytic Proton acceptor. Substrate is bound by residues Gly78, Ile152, and 173–174 (ME). Asp197 acts as the Proton donor in catalysis.

This sequence belongs to the PNP/UDP phosphorylase family. MtnN subfamily. In terms of assembly, homodimer.

It catalyses the reaction S-adenosyl-L-homocysteine + H2O = S-(5-deoxy-D-ribos-5-yl)-L-homocysteine + adenine. The catalysed reaction is S-methyl-5'-thioadenosine + H2O = 5-(methylsulfanyl)-D-ribose + adenine. It carries out the reaction 5'-deoxyadenosine + H2O = 5-deoxy-D-ribose + adenine. The protein operates within amino-acid biosynthesis; L-methionine biosynthesis via salvage pathway; S-methyl-5-thio-alpha-D-ribose 1-phosphate from S-methyl-5'-thioadenosine (hydrolase route): step 1/2. In terms of biological role, catalyzes the irreversible cleavage of the glycosidic bond in both 5'-methylthioadenosine (MTA) and S-adenosylhomocysteine (SAH/AdoHcy) to adenine and the corresponding thioribose, 5'-methylthioribose and S-ribosylhomocysteine, respectively. Also cleaves 5'-deoxyadenosine, a toxic by-product of radical S-adenosylmethionine (SAM) enzymes, into 5-deoxyribose and adenine. Thus, is required for in vivo function of the radical SAM enzymes biotin synthase and lipoic acid synthase, that are inhibited by 5'-deoxyadenosine accumulation. The protein is 5'-methylthioadenosine/S-adenosylhomocysteine nucleosidase of Salmonella agona (strain SL483).